We begin with the raw amino-acid sequence, 149 residues long: Interleukin-2 (149 aa).

The N-terminal stretch at 1 to 20 is a signal peptide; it reads MYRMQLLSCIALTLAVLANS. Residue Thr23 is glycosylated (O-linked (GalNAc...) threonine). The cysteines at positions 78 and 121 are disulfide-linked. N-linked (GlcNAc...) asparagine glycosylation occurs at Asn106.

It belongs to the IL-2 family.

It localises to the secreted. In terms of biological role, cytokine produced by activated CD4-positive helper T-cells and to a lesser extend activated CD8-positive T-cells and natural killer (NK) cells that plays pivotal roles in the immune response and tolerance. Binds to a receptor complex composed of either the high-affinity trimeric IL-2R (IL2RA/CD25, IL2RB/CD122 and IL2RG/CD132) or the low-affinity dimeric IL-2R (IL2RB and IL2RG). Interaction with the receptor leads to oligomerization and conformation changes in the IL-2R subunits resulting in downstream signaling starting with phosphorylation of JAK1 and JAK3. In turn, JAK1 and JAK3 phosphorylate the receptor to form a docking site leading to the phosphorylation of several substrates including STAT5. This process leads to activation of several pathways including STAT, phosphoinositide-3-kinase/PI3K and mitogen-activated protein kinase/MAPK pathways. Functions as a T-cell growth factor and can increase NK-cell cytolytic activity as well. Promotes strong proliferation of activated B-cells and subsequently immunoglobulin production. Plays a pivotal role in regulating the adaptive immune system by controlling the survival and proliferation of regulatory T-cells, which are required for the maintenance of immune tolerance. Moreover, participates in the differentiation and homeostasis of effector T-cell subsets, including Th1, Th2, Th17 as well as memory CD8-positive T-cells. This chain is Interleukin-2 (IL2), found in Equus caballus (Horse).